The sequence spans 516 residues: Ribonuclease Y (516 aa).

A helical membrane pass occupies residues M1–W21. A KH domain is found at T206–L269. In terms of domain architecture, HD spans A332–A425.

It belongs to the RNase Y family.

The protein localises to the cell membrane. Functionally, endoribonuclease that initiates mRNA decay. This is Ribonuclease Y from Lachnoclostridium phytofermentans (strain ATCC 700394 / DSM 18823 / ISDg) (Clostridium phytofermentans).